We begin with the raw amino-acid sequence, 156 residues long: Ribosome maturation factor RimP (156 aa).

This sequence belongs to the RimP family.

It is found in the cytoplasm. Required for maturation of 30S ribosomal subunits. This chain is Ribosome maturation factor RimP, found in Bacillus cereus (strain B4264).